The sequence spans 173 residues: Large ribosomal subunit protein bL9 (173 aa).

The protein belongs to the bacterial ribosomal protein bL9 family.

Functionally, binds to the 23S rRNA. The polypeptide is Large ribosomal subunit protein bL9 (Rickettsia bellii (strain RML369-C)).